A 362-amino-acid polypeptide reads, in one-letter code: Endopolygalacturonase II (362 aa).

The N-terminal stretch at 1-21 is a signal peptide; the sequence is MHSFASLLAYGLAASATLASA. Positions 22 to 27 are excised as a propeptide; sequence SPIEAR. C30 and C45 are disulfide-bonded. A PbH1 1 repeat occupies 156–186; the sequence is ADDITLTDITINNADGDTLGGHNTDAFDVGN. D201 serves as the catalytic Proton donor. A disulfide bond links C203 and C219. H223 is an active-site residue. 3 PbH1 repeats span residues 238-259, 267-289, and 301-322; these read VKNV…RIKT, VSEI…VIQQ, and TNGV…DSKA. The N-linked (GlcNAc...) (high mannose) asparagine glycan is linked to N240. 2 disulfides stabilise this stretch: C329-C334 and C353-C362.

This sequence belongs to the glycosyl hydrolase 28 family.

The protein resides in the secreted. The catalysed reaction is (1,4-alpha-D-galacturonosyl)n+m + H2O = (1,4-alpha-D-galacturonosyl)n + (1,4-alpha-D-galacturonosyl)m.. Functionally, involved in maceration and soft-rotting of plant tissue. Hydrolyzes the 1,4-alpha glycosidic bonds of de-esterified pectate in the smooth region of the plant cell wall. In Aspergillus niger, this protein is Endopolygalacturonase II.